A 300-amino-acid chain; its full sequence is 4-hydroxy-tetrahydrodipicolinate synthase (300 aa).

Position 45 (Thr-45) interacts with pyruvate. Tyr-140 serves as the catalytic Proton donor/acceptor. Residue Lys-169 is the Schiff-base intermediate with substrate of the active site. Ile-210 contributes to the pyruvate binding site.

It belongs to the DapA family. In terms of assembly, homotetramer; dimer of dimers.

The protein localises to the cytoplasm. The enzyme catalyses L-aspartate 4-semialdehyde + pyruvate = (2S,4S)-4-hydroxy-2,3,4,5-tetrahydrodipicolinate + H2O + H(+). The protein operates within amino-acid biosynthesis; L-lysine biosynthesis via DAP pathway; (S)-tetrahydrodipicolinate from L-aspartate: step 3/4. Catalyzes the condensation of (S)-aspartate-beta-semialdehyde [(S)-ASA] and pyruvate to 4-hydroxy-tetrahydrodipicolinate (HTPA). The polypeptide is 4-hydroxy-tetrahydrodipicolinate synthase (Helicobacter pylori (strain Shi470)).